We begin with the raw amino-acid sequence, 562 residues long: 3-hydroxy-3-methylglutaryl-coenzyme A reductase 2 (562 aa).

The next 2 membrane-spanning stretches (helical) occupy residues alanine 32–leucine 56 and isoleucine 77–phenylalanine 100. The segment at arginine 101–glutamate 146 is linker. Asparagine 118 carries N-linked (GlcNAc...) asparagine glycosylation. Positions aspartate 147–arginine 562 are catalytic. Glutamate 240 functions as the Charge relay system in the catalytic mechanism. The N-linked (GlcNAc...) asparagine glycan is linked to asparagine 304. Catalysis depends on charge relay system residues lysine 372 and aspartate 448. Histidine 544 functions as the Proton donor in the catalytic mechanism. N-linked (GlcNAc...) asparagine glycosylation occurs at asparagine 548. Phosphoserine is present on serine 550.

The protein belongs to the HMG-CoA reductase family. In terms of tissue distribution, restricted to young seedlings, roots, and inflorescences. Expressed in root tips, shoot apex, secretory zone of the stigma, microspores, mature pollen grains, gynoecium vascular tissue and fertilized ovules.

The protein localises to the endoplasmic reticulum membrane. The catalysed reaction is (R)-mevalonate + 2 NADP(+) + CoA = (3S)-3-hydroxy-3-methylglutaryl-CoA + 2 NADPH + 2 H(+). Its pathway is metabolic intermediate biosynthesis; (R)-mevalonate biosynthesis; (R)-mevalonate from acetyl-CoA: step 3/3. Regulated at the post-translational level in response to alterations of the sphingolipid and the sterol biosynthetic pathways. Catalyzes the synthesis of mevalonate. The specific precursor of all isoprenoid compounds present in plants. The sequence is that of 3-hydroxy-3-methylglutaryl-coenzyme A reductase 2 (HMG2) from Arabidopsis thaliana (Mouse-ear cress).